Consider the following 383-residue polypeptide: U-box domain-containing protein 63 (383 aa).

A disordered region spans residues 166–186; the sequence is PDGNVSNSHRNTQQKRDFASV. The U-box domain maps to 201-273; sequence SLKAILSDPV…HAFRQEEDSD (73 aa).

It carries out the reaction S-ubiquitinyl-[E2 ubiquitin-conjugating enzyme]-L-cysteine + [acceptor protein]-L-lysine = [E2 ubiquitin-conjugating enzyme]-L-cysteine + N(6)-ubiquitinyl-[acceptor protein]-L-lysine.. It participates in protein modification; protein ubiquitination. Functionally, functions as an E3 ubiquitin ligase. This chain is U-box domain-containing protein 63 (PUB63), found in Arabidopsis thaliana (Mouse-ear cress).